Reading from the N-terminus, the 765-residue chain is MTTFLEFIQQNEDRDGVRFSWNVWPSSRLEATRMVVPVAALLTPLKERPDLPPIQYEPVLCSRTTCRAVLNPLCQVDYRAKLWACNFCYQRNQFPPTYAGISEMNQPAELLPQFSSIEYVVQRGPQMPLIFLYVVDTCMEDEDLQALKESMQMSLSLLPPTALVGLITFGRMVHVHELGCEGISKSYVFRGNKDLTGKQIQEMLSLTKSPAAQQGRGPQVQQPPPSNRFLQPVQNIDMNLTDLLGELQRDPWPVPQGKRPLRSSGAALSIAVGLLECTFPNTGARIMMFIGGPATQGPGMVVGDELKTPIRSWHDIEKDNAKYVKKATKHYEALAHRAAASGHVIDIYACALDQTGLLEMKCCPNNTGGYMVMGDSFNTSLFKQTFQRVFTKDAQSNFKMAFGGTLEIKTSRELKISGAIGPCVSLNAKGPCVSENEIGTGGTCQWKICGINPFTTLAVYFEVVNQHNAPIPQGGRGAIQFVTQYQHSSGQRRIRVTTIARNWADAQTQIQNIAASFDQEAAAILMARLAVYRAETEEGPDVLRWLDRQLIRLCQKFGEYHKDDPVSFKFSETFSLYPQFMFHLRRSPFLQVFNNSPDESSYYRHHFMRQDLTQSLIMVQPILYAYSFNGPPEPVLLDSSSILPDRILLMDTFFQILIYLGETIAQWKKAGYQDMPEYENFRHLLQAPVDDGQEILQSRFPMPRYIDTEHGGSQARFLLSKVNPSQTHNNMYGWGQESGAPILTDDVSLQVFMDHLKKLAVSSAA.

C61, C66, C85, and C88 together coordinate Zn(2+). The Gelsolin-like repeat unit spans residues 632-718 (PEPVLLDSSS…EHGGSQARFL (87 aa)).

It belongs to the SEC23/SEC24 family. SEC23 subfamily. COPII is composed of at least five proteins: the Sec23/24 complex, the Sec13/31 complex and Sar1.

The protein resides in the cytoplasmic vesicle. It is found in the COPII-coated vesicle membrane. The protein localises to the endoplasmic reticulum membrane. It localises to the cytoplasm. Its subcellular location is the cytosol. Functionally, component of the coat protein complex II (COPII) which promotes the formation of transport vesicles from the endoplasmic reticulum (ER). The coat has two main functions, the physical deformation of the endoplasmic reticulum membrane into vesicles and the selection of cargo molecules for their transport to the Golgi complex. This Xenopus tropicalis (Western clawed frog) protein is Protein transport protein Sec23A.